Reading from the N-terminus, the 148-residue chain is UPF0178 protein LPC_0108 (148 aa).

Belongs to the UPF0178 family.

This Legionella pneumophila (strain Corby) protein is UPF0178 protein LPC_0108.